The chain runs to 304 residues: UTP--glucose-1-phosphate uridylyltransferase 1 (304 aa).

This sequence belongs to the UDPGP type 2 family.

It carries out the reaction alpha-D-glucose 1-phosphate + UTP + H(+) = UDP-alpha-D-glucose + diphosphate. Its pathway is carbohydrate metabolism; nucleotide-sugar metabolism. The protein is UTP--glucose-1-phosphate uridylyltransferase 1 (hasC1) of Streptococcus pyogenes serotype M3 (strain ATCC BAA-595 / MGAS315).